The following is a 296-amino-acid chain: Endonuclease 5 (296 aa).

A signal peptide spans 1-20 (MRLWIVSVLVLTHLVHGALC). A divalent metal cation is bound by residues Trp-21 and His-26. 21–26 (WGKDGH) serves as a coordination point for substrate. A disulfide bridge connects residues Cys-30 and Cys-62. Asp-66 and His-81 together coordinate a divalent metal cation. Residues 66–72 (DEIKKLS), 81–84 (HYVN), and 91–96 (NYEYCR) each bind substrate. 3 disulfide bridges follow: Cys-90–Cys-243, Cys-98–Cys-108, and Cys-223–Cys-230. Substrate contacts are provided by Asn-115 and Tyr-133. An N-linked (GlcNAc...) asparagine glycan is attached at Asn-115. The N-linked (GlcNAc...) asparagine glycan is linked to Asn-134. A divalent metal cation is bound by residues His-144, Asp-148, and His-154. A substrate binding region spans residues 144–193 (HYMGDVHQPLHTGFLGDLGGNTIIVNWYHNKSNLHHVWDNMIIDSALETY). N-linked (GlcNAc...) asparagine glycosylation is present at Asn-173. Residues His-178 and Asp-182 each coordinate a divalent metal cation. N-linked (GlcNAc...) asparagine glycosylation is present at Asn-195. A propeptide spans 281–296 (ATLNRIFSAKPKLAGL) (removed in mature form).

The protein belongs to the nuclease type I family. Monomer. It depends on Zn(2+) as a cofactor.

The catalysed reaction is Endonucleolytic cleavage to 5'-phosphomononucleotide and 5'-phosphooligonucleotide end-products.. Its function is as follows. Hydrolyzes, with low efficiency, only single-stranded DNA and RNA without apparent specificity for bases. Endonuclease that recognizes and cleaves some mismatches with high efficiency, including heteroduplex double-stranded DNA; mostly efficient on T/G, A/G and G/G mismatches, less efficient for T/T and poorly efficient for C/C, A/A, T/C and A/C. This chain is Endonuclease 5, found in Arabidopsis thaliana (Mouse-ear cress).